Here is a 540-residue protein sequence, read N- to C-terminus: T-complex protein 1 subunit delta (540 aa).

The span at 1-12 shows a compositional bias: low complexity; that stretch reads MPPAVPAAAATA. Positions 1–32 are disordered; that stretch reads MPPAVPAAAATARQSASGRERNFKDKDKPESV. Over residues 18–31 the composition is skewed to basic and acidic residues; sequence GRERNFKDKDKPES.

It belongs to the TCP-1 chaperonin family. Heterooligomeric complex of about 850 to 900 kDa that forms two stacked rings, 12 to 16 nm in diameter.

It is found in the cytoplasm. Molecular chaperone; assists the folding of proteins upon ATP hydrolysis. Known to play a role, in vitro, in the folding of actin and tubulin. The chain is T-complex protein 1 subunit delta (cct-4) from Caenorhabditis elegans.